Reading from the N-terminus, the 108-residue chain is Pyrimidine/purine nucleoside phosphorylase (108 aa).

This sequence belongs to the nucleoside phosphorylase PpnP family.

The catalysed reaction is a purine D-ribonucleoside + phosphate = a purine nucleobase + alpha-D-ribose 1-phosphate. The enzyme catalyses adenosine + phosphate = alpha-D-ribose 1-phosphate + adenine. It carries out the reaction cytidine + phosphate = cytosine + alpha-D-ribose 1-phosphate. It catalyses the reaction guanosine + phosphate = alpha-D-ribose 1-phosphate + guanine. The catalysed reaction is inosine + phosphate = alpha-D-ribose 1-phosphate + hypoxanthine. The enzyme catalyses thymidine + phosphate = 2-deoxy-alpha-D-ribose 1-phosphate + thymine. It carries out the reaction uridine + phosphate = alpha-D-ribose 1-phosphate + uracil. It catalyses the reaction xanthosine + phosphate = alpha-D-ribose 1-phosphate + xanthine. Catalyzes the phosphorolysis of diverse nucleosides, yielding D-ribose 1-phosphate and the respective free bases. Can use uridine, adenosine, guanosine, cytidine, thymidine, inosine and xanthosine as substrates. Also catalyzes the reverse reactions. The sequence is that of Pyrimidine/purine nucleoside phosphorylase from Acinetobacter baumannii (strain AB307-0294).